A 235-amino-acid polypeptide reads, in one-letter code: Probable transglycosylase SceD (235 aa).

Positions 1 to 26 are cleaved as a signal peptide; sequence MKKTIIASSLAVGLGVVAGNAGHADA. Residues 90–159 form a disordered region; that stretch reads QQDVSAQAST…NASSGSSVNV (70 aa). A compositionally biased stretch (polar residues) spans 99–110; that stretch reads TVSNQTSAEQVG. The span at 111–159 shows a compositional bias: low complexity; that stretch reads SQQQSSQAQPTQTQQAPQTEQTQQPQTEATTSNSSSSNNNASSGSSVNV.

It belongs to the transglycosylase family. SceD subfamily.

It is found in the secreted. Is able to cleave peptidoglycan and affects clumping and separation of bacterial cells. The polypeptide is Probable transglycosylase SceD (sceD) (Staphylococcus haemolyticus (strain JCSC1435)).